Consider the following 199-residue polypeptide: Nicotinamide riboside kinase 1 (199 aa).

10-18 (GVTNSGKTT) provides a ligand contact to ATP. Mg(2+) is bound by residues threonine 17 and aspartate 36. The active-site Proton acceptor is the aspartate 36. Substrate contacts are provided by residues 36-39 (DDFF) and 55-56 (YD). Arginine 128 provides a ligand contact to ATP. Substrate is bound by residues arginine 129 and 134 to 135 (YQ). ATP is bound by residues 132-134 (RVY) and 172-174 (KSE).

The protein belongs to the uridine kinase family. NRK subfamily. In terms of assembly, monomer.

The enzyme catalyses beta-nicotinamide D-riboside + ATP = beta-nicotinamide D-ribonucleotide + ADP + H(+). It carries out the reaction beta-D-ribosylnicotinate + ATP = nicotinate beta-D-ribonucleotide + ADP + H(+). It participates in cofactor biosynthesis; NAD(+) biosynthesis. Catalyzes the phosphorylation of nicotinamide riboside (NR) and nicotinic acid riboside (NaR) to form nicotinamide mononucleotide (NMN) and nicotinic acid mononucleotide (NaMN). The enzyme also phosphorylates the antitumor drugs tiazofurin and 3-deazaguanosine. The sequence is that of Nicotinamide riboside kinase 1 (NMRK1) from Homo sapiens (Human).